Here is a 255-residue protein sequence, read N- to C-terminus: Hydroxyacylglutathione hydrolase (255 aa).

7 residues coordinate Zn(2+): H56, H58, D60, H61, H114, D133, and H171.

This sequence belongs to the metallo-beta-lactamase superfamily. Glyoxalase II family. As to quaternary structure, monomer. Zn(2+) is required as a cofactor.

The enzyme catalyses an S-(2-hydroxyacyl)glutathione + H2O = a 2-hydroxy carboxylate + glutathione + H(+). The protein operates within secondary metabolite metabolism; methylglyoxal degradation; (R)-lactate from methylglyoxal: step 2/2. Functionally, thiolesterase that catalyzes the hydrolysis of S-D-lactoyl-glutathione to form glutathione and D-lactic acid. This is Hydroxyacylglutathione hydrolase from Bradyrhizobium diazoefficiens (strain JCM 10833 / BCRC 13528 / IAM 13628 / NBRC 14792 / USDA 110).